A 296-amino-acid polypeptide reads, in one-letter code: uncharacterized protein (296 aa).

Helical transmembrane passes span 1–21 (MVNLLFLFFIMSFFPNNIFDY), 30–50 (LITASLKILFALAILLIGFWL), 71–91 (FISFAGNISYYLLLVVFFVLC), 92–112 (LAQLGIQTSSLVALLGASTLA), 113–133 (IGLALQGSLANVAGGILLVLF), and 142–162 (IEVAGIEGIVESIEILSTTIC).

It belongs to the MscS (TC 1.A.23) family.

It localises to the cell membrane. This is an uncharacterized protein from Synechocystis sp. (strain ATCC 27184 / PCC 6803 / Kazusa).